Reading from the N-terminus, the 182-residue chain is Large ribosomal subunit protein uL6 (182 aa).

This sequence belongs to the universal ribosomal protein uL6 family. In terms of assembly, part of the 50S ribosomal subunit.

Functionally, this protein binds to the 23S rRNA, and is important in its secondary structure. It is located near the subunit interface in the base of the L7/L12 stalk, and near the tRNA binding site of the peptidyltransferase center. This Carboxydothermus hydrogenoformans (strain ATCC BAA-161 / DSM 6008 / Z-2901) protein is Large ribosomal subunit protein uL6.